A 253-amino-acid chain; its full sequence is MSGHSKWATTKHKKAAIDAKRAKAFAKYIKGIEVAARMGGADTSGNPALELAVSKAKKNSVPNDNIDRAIKRGAGLTGETIDYTEILYEARGPQGTALYIECLTDNKNRAASEVRVAVTRHGGTMADSGSVAYLFERKGVVEVAKTDGLTEDDVLMAVLDAGADEVLDESDVFEVVSEATDLPAIRAALDEAGLEYNNDDPQFRATMTVDLDAEGARKFLKLADAVEELDDVQNVYSNANIPADVMAQLEDDE.

Belongs to the TACO1 family.

It is found in the cytoplasm. This is Probable transcriptional regulatory protein KRH_13670 from Kocuria rhizophila (strain ATCC 9341 / DSM 348 / NBRC 103217 / DC2201).